The sequence spans 189 residues: Small ribosomal subunit protein uS4 (189 aa).

Residues 107 to 178 (RRLQTQVFKL…AGRVKRKNQG (72 aa)) enclose the S4 RNA-binding domain. The segment at 160-189 (HNSPYGGGRAGRVKRKNQGKGGEEGAEEEE) is disordered.

It belongs to the universal ribosomal protein uS4 family. Component of the small ribosomal subunit. Mature ribosomes consist of a small (40S) and a large (60S) subunit. The 40S subunit contains about 32 different proteins and 1 molecule of RNA (18S). The 60S subunit contains 45 different proteins and 3 molecules of RNA (25S, 5.8S and 5S).

It is found in the cytoplasm. Component of the ribosome, a large ribonucleoprotein complex responsible for the synthesis of proteins in the cell. The small ribosomal subunit (SSU) binds messenger RNAs (mRNAs) and translates the encoded message by selecting cognate aminoacyl-transfer RNA (tRNA) molecules. The large subunit (LSU) contains the ribosomal catalytic site termed the peptidyl transferase center (PTC), which catalyzes the formation of peptide bonds, thereby polymerizing the amino acids delivered by tRNAs into a polypeptide chain. The nascent polypeptides leave the ribosome through a tunnel in the LSU and interact with protein factors that function in enzymatic processing, targeting, and the membrane insertion of nascent chains at the exit of the ribosomal tunnel. RPS9B is involved in nucleolar processing of pre-18S ribosomal RNA and ribosome assembly. This chain is Small ribosomal subunit protein uS4 (RPS9B), found in Candida albicans (strain SC5314 / ATCC MYA-2876) (Yeast).